Here is a 62-residue protein sequence, read N- to C-terminus: Phyllokinin-1 (62 aa).

Residues 1–19 (MSFLKKSLFLVLFLGLVSS) form the signal peptide. The propeptide occupies 20 to 48 (SICEEEKRETEEEENEDEIEEESEEKKRE). Positions 22–62 (CEEEKRETEEEENEDEIEEESEEKKREDPERPPGFTPFRVY) are disordered. The span at 30–42 (EEEENEDEIEEES) shows a compositional bias: acidic residues. Positions 43–52 (EEKKREDPER) are enriched in basic and acidic residues. At Tyr62 the chain carries Sulfotyrosine; partial.

The protein belongs to the frog skin active peptide (FSAP) family. Bradykinin-related peptide subfamily. In terms of processing, asp,Pro,Glu-[Thr6,Val10]-phyllokinin and [Thr6,Val10]-phyllokinin occur in sulfated and nonsulfated forms. [Thr6]-bradykinin and Des-Arg-[Thr6]-bradykinin are nonsulfated. In terms of tissue distribution, expressed by the skin glands.

The protein resides in the secreted. In terms of biological role, inhibits ACE with a Ki of 1.6 uM, and targets B2 bradykinin receptor (BDKRB2). Provokes contraction of smooth muscle preparation (ileum). In vivo, induces an early hyperalgesic effects in living rats after intraplantar injection. The polypeptide is Phyllokinin-1 (Pithecopus azureus (Orange-legged monkey tree frog)).